The sequence spans 155 residues: RNA pyrophosphohydrolase (155 aa).

The Nudix hydrolase domain maps to 5–149 (EYRSGVGIML…KKPLYEKILS (145 aa)). The Nudix box motif lies at 39–60 (GGLEAKETPEVGVLRELEEETG).

Belongs to the Nudix hydrolase family. RppH subfamily. Requires a divalent metal cation as cofactor.

Functionally, accelerates the degradation of transcripts by removing pyrophosphate from the 5'-end of triphosphorylated RNA, leading to a more labile monophosphorylated state that can stimulate subsequent ribonuclease cleavage. This Zymomonas mobilis subsp. mobilis (strain ATCC 31821 / ZM4 / CP4) protein is RNA pyrophosphohydrolase.